A 274-amino-acid polypeptide reads, in one-letter code: NAD kinase (274 aa).

Catalysis depends on Asp-60, which acts as the Proton acceptor. NAD(+) contacts are provided by residues 60 to 61 (DG), Lys-65, 127 to 128 (NE), and Arg-152.

This sequence belongs to the NAD kinase family. It depends on a divalent metal cation as a cofactor.

It is found in the cytoplasm. It carries out the reaction NAD(+) + ATP = ADP + NADP(+) + H(+). Its function is as follows. Involved in the regulation of the intracellular balance of NAD and NADP, and is a key enzyme in the biosynthesis of NADP. Catalyzes specifically the phosphorylation on 2'-hydroxyl of the adenosine moiety of NAD to yield NADP. This is NAD kinase from Mycoplasmoides gallisepticum (strain R(low / passage 15 / clone 2)) (Mycoplasma gallisepticum).